Here is a 192-residue protein sequence, read N- to C-terminus: MLGRLTGLLAEKSPPQVLIDVGGVGYEVDVPMSSFFNLPAIGEKVTLLTHFVVREDAQVLFGFLTAPERETFRMLIKISGVGPRTALSILSGLTVGDLAQAVTAQDASRLVKVPGIGKKTAERLLLELKGKLGADLGPAIGGKPASDAQADILQALIALGYSEREAQAAVKALPAEVGVSDGIKLALKALAR.

The tract at residues 1 to 64 (MLGRLTGLLA…EDAQVLFGFL (64 aa)) is domain I. Residues 65 to 139 (TAPERETFRM…GKLGADLGPA (75 aa)) form a domain II region. A flexible linker region spans residues 139–143 (AIGGK). Residues 144–192 (PASDAQADILQALIALGYSEREAQAAVKALPAEVGVSDGIKLALKALAR) form a domain III region.

The protein belongs to the RuvA family. Homotetramer. Forms an RuvA(8)-RuvB(12)-Holliday junction (HJ) complex. HJ DNA is sandwiched between 2 RuvA tetramers; dsDNA enters through RuvA and exits via RuvB. An RuvB hexamer assembles on each DNA strand where it exits the tetramer. Each RuvB hexamer is contacted by two RuvA subunits (via domain III) on 2 adjacent RuvB subunits; this complex drives branch migration. In the full resolvosome a probable DNA-RuvA(4)-RuvB(12)-RuvC(2) complex forms which resolves the HJ.

The protein resides in the cytoplasm. The RuvA-RuvB-RuvC complex processes Holliday junction (HJ) DNA during genetic recombination and DNA repair, while the RuvA-RuvB complex plays an important role in the rescue of blocked DNA replication forks via replication fork reversal (RFR). RuvA specifically binds to HJ cruciform DNA, conferring on it an open structure. The RuvB hexamer acts as an ATP-dependent pump, pulling dsDNA into and through the RuvAB complex. HJ branch migration allows RuvC to scan DNA until it finds its consensus sequence, where it cleaves and resolves the cruciform DNA. This chain is Holliday junction branch migration complex subunit RuvA, found in Methylibium petroleiphilum (strain ATCC BAA-1232 / LMG 22953 / PM1).